A 298-amino-acid polypeptide reads, in one-letter code: Phosphatidylserine decarboxylase proenzyme (298 aa).

Residues D113, H169, and S256 each act as charge relay system; for autoendoproteolytic cleavage activity in the active site. The active-site Schiff-base intermediate with substrate; via pyruvic acid; for decarboxylase activity is S256. Residue S256 is modified to Pyruvic acid (Ser); by autocatalysis.

The protein belongs to the phosphatidylserine decarboxylase family. PSD-B subfamily. Prokaryotic type II sub-subfamily. As to quaternary structure, heterodimer of a large membrane-associated beta subunit and a small pyruvoyl-containing alpha subunit. The cofactor is pyruvate. Post-translationally, is synthesized initially as an inactive proenzyme. Formation of the active enzyme involves a self-maturation process in which the active site pyruvoyl group is generated from an internal serine residue via an autocatalytic post-translational modification. Two non-identical subunits are generated from the proenzyme in this reaction, and the pyruvate is formed at the N-terminus of the alpha chain, which is derived from the carboxyl end of the proenzyme. The autoendoproteolytic cleavage occurs by a canonical serine protease mechanism, in which the side chain hydroxyl group of the serine supplies its oxygen atom to form the C-terminus of the beta chain, while the remainder of the serine residue undergoes an oxidative deamination to produce ammonia and the pyruvoyl prosthetic group on the alpha chain. During this reaction, the Ser that is part of the protease active site of the proenzyme becomes the pyruvoyl prosthetic group, which constitutes an essential element of the active site of the mature decarboxylase.

It is found in the cell membrane. The enzyme catalyses a 1,2-diacyl-sn-glycero-3-phospho-L-serine + H(+) = a 1,2-diacyl-sn-glycero-3-phosphoethanolamine + CO2. It participates in phospholipid metabolism; phosphatidylethanolamine biosynthesis; phosphatidylethanolamine from CDP-diacylglycerol: step 2/2. Catalyzes the formation of phosphatidylethanolamine (PtdEtn) from phosphatidylserine (PtdSer). The sequence is that of Phosphatidylserine decarboxylase proenzyme from Desulfitobacterium hafniense (strain Y51).